Consider the following 305-residue polypeptide: Nucleotide-binding protein Mpe_A3336 (305 aa).

An ATP-binding site is contributed by 22 to 29; it reads GISGSGKS. 74 to 77 is a binding site for GTP; the sequence is DVRS.

This sequence belongs to the RapZ-like family.

In terms of biological role, displays ATPase and GTPase activities. The protein is Nucleotide-binding protein Mpe_A3336 of Methylibium petroleiphilum (strain ATCC BAA-1232 / LMG 22953 / PM1).